Reading from the N-terminus, the 805-residue chain is Leucine--tRNA ligase (805 aa).

A 'HIGH' region motif is present at residues P40 to H51. The 'KMSKS' region signature appears at K576–S580. Residue K579 participates in ATP binding.

It belongs to the class-I aminoacyl-tRNA synthetase family.

It is found in the cytoplasm. The enzyme catalyses tRNA(Leu) + L-leucine + ATP = L-leucyl-tRNA(Leu) + AMP + diphosphate. The chain is Leucine--tRNA ligase from Ligilactobacillus salivarius (strain UCC118) (Lactobacillus salivarius).